Here is a 480-residue protein sequence, read N- to C-terminus: Cysteine--tRNA ligase (480 aa).

Residue cysteine 27 coordinates Zn(2+). The short motif at 29-39 is the 'HIGH' region element; that stretch reads PTVYNYAHIGN. Zn(2+) is bound by residues cysteine 221, histidine 246, and glutamate 250. The short motif at 278–282 is the 'KMSKS' region element; sequence KMSKS. Lysine 281 is a binding site for ATP.

It belongs to the class-I aminoacyl-tRNA synthetase family. Monomer. Zn(2+) is required as a cofactor.

The protein localises to the cytoplasm. The enzyme catalyses tRNA(Cys) + L-cysteine + ATP = L-cysteinyl-tRNA(Cys) + AMP + diphosphate. This Borreliella afzelii (strain PKo) (Borrelia afzelii) protein is Cysteine--tRNA ligase.